We begin with the raw amino-acid sequence, 339 residues long: Protein H339R (339 aa).

The protein belongs to the asfivirus H339R family. Interacts with NACA (alpha chain of nascent polypeptide-associated complex).

The protein resides in the host cytoplasm. It localises to the host nucleus. Its subcellular location is the virion. The polypeptide is Protein H339R (African swine fever virus (isolate Warthog/Namibia/Wart80/1980) (ASFV)).